Consider the following 1028-residue polypeptide: Serine/threonine-protein kinase fray2 (1028 aa).

Residues 1–67 (MSDDKYHHDK…PKPRKNYPNS (67 aa)) form a disordered region. The span at 20-54 (KQSTAAALSSSSTLASSSSMTTTTTTTSTTTTAAS) shows a compositional bias: low complexity. The Protein kinase domain occupies 71–330 (YELKETIGKG…PSKLLEHRFF (260 aa)). ATP-binding positions include 77-85 (IGKGGSGLV) and K100. The Proton acceptor role is filled by D195. Position 230 is a phosphothreonine; by autocatalysis (T230). The segment covering 368–381 (TSSPQFDTGHSNSA) has biased composition (polar residues). Disordered regions lie at residues 368–467 (TSSP…STVV), 486–561 (AYHQ…LQQP), and 580–914 (DLIT…IQSK). 2 stretches are compositionally biased toward low complexity: residues 387 to 419 (PNEN…NNNN) and 432 to 458 (TPSH…SNHT). Composition is skewed to polar residues over residues 503 to 518 (IPNH…SAHS) and 528 to 542 (IHPT…VVNN). Residues 543–561 (TQQPQTLQPPQQQHQLQQP) show a composition bias toward low complexity. Residues 595 to 616 (IPSSSSHGNIPSLVTTSPKSPL) show a composition bias toward polar residues. Composition is skewed to low complexity over residues 617–642 (QHQQ…ISSN) and 683–700 (SSRA…SHTS). 4 stretches are compositionally biased toward basic and acidic residues: residues 701-714 (SSDE…SDRK), 728-742 (SKRD…DRSN), 753-855 (VSRD…DRSR), and 865-893 (SRDS…DYKS).

The protein belongs to the protein kinase superfamily. STE Ser/Thr protein kinase family. STE20 subfamily. Mn(2+) serves as cofactor. In terms of processing, undergoes autophosphorylation in the catalytic domain.

It catalyses the reaction L-seryl-[protein] + ATP = O-phospho-L-seryl-[protein] + ADP + H(+). The enzyme catalyses L-threonyl-[protein] + ATP = O-phospho-L-threonyl-[protein] + ADP + H(+). The chain is Serine/threonine-protein kinase fray2 from Dictyostelium discoideum (Social amoeba).